Here is a 237-residue protein sequence, read N- to C-terminus: Ribosomally synthesized cyclic peptide ustiloxin B precursosr (237 aa).

Positions 1 to 19 (MKLILTLLVSGLCALAAPA) are cleaved as a signal peptide. 2 propeptides span residues 20-22 (AKR) and 234-237 (HGGH).

UstA is processed by the subtilisin-like endoprotease kex2 that is outside the ustiloxin B gene cluster, at the C-terminal side of Arg-Lys, after transfer to Golgi apparatus through the endoplasmic reticulum (ER). Cleavage by kex2 generates 16 peptides YAIG-I to YAIG-XVI. To process the precursor peptide further, at least two peptidases are necessary to cleave the N-terminal and C-terminal sides of the Tyr-Ala-Ile-Gly core peptide which serves as backbone for the synthesis of ustiloxin B, through cyclization and modification of the tyrosine. One of the two peptidases must be the serine peptidase ustP; and the other pepdidase is probably ustH. Macrocyclization of the core peptide derived from ustA requires the tyrosinase ustQ, as well as the homologous oxidases ustYa and ustYb, and leads to the production of the first cyclization product N-desmethylustiloxin F. For the formation of N-desmethylustiloxin F, three oxidation steps are required, hydroxylation at the benzylic position, hydroxylation at either the aromatic ring of Tyr or beta-position of Ile, and oxidative cyclization. UstQ may catalyze the oxidation of a phenol moiety, whereas the ustYa and ustYb are most likely responsible for the remaining two-step oxidations. N-desmethylustiloxin F is then methylated by ustM to yield ustiloxin F which in turn substrate of the cytochrome P450 monooxygenase ustC which catalyzes the formation of S-deoxyustiloxin H. The flavoprotein monooxygenases ustF1 and ustF2 then participate in the modification of the side chain of S-deoxyustiloxin H, leading to the synthesis of an oxime intermediate, via ustiloxin H. Finally, carboxylative dehydration performed by the cysteine desulfurase-like protein ustD yields ustiloxin B.

It participates in mycotoxin biosynthesis. Ribosomally synthesized cyclic peptide ustiloxin B precursor: Part of the gene cluster that mediates the biosynthesis of the secondary metabolite ustiloxin B, an antimitotic tetrapeptide. The ustA translated product contains a 16-fold repeated peptide embedding the tetrapeptide Tyr-Ala-Ile-Gly, that is converted into the cyclic moiety of ustiloxin B. This is Ribosomally synthesized cyclic peptide ustiloxin B precursosr from Aspergillus flavus (strain ATCC 200026 / FGSC A1120 / IAM 13836 / NRRL 3357 / JCM 12722 / SRRC 167).